The sequence spans 201 residues: Peptidyl-tRNA hydrolase (201 aa).

Residue Tyr17 participates in tRNA binding. The Proton acceptor role is filled by His22. Residues Phe76, Asn78, and Asn124 each contribute to the tRNA site.

This sequence belongs to the PTH family. Monomer.

It localises to the cytoplasm. The enzyme catalyses an N-acyl-L-alpha-aminoacyl-tRNA + H2O = an N-acyl-L-amino acid + a tRNA + H(+). Hydrolyzes ribosome-free peptidyl-tRNAs (with 1 or more amino acids incorporated), which drop off the ribosome during protein synthesis, or as a result of ribosome stalling. Its function is as follows. Catalyzes the release of premature peptidyl moieties from peptidyl-tRNA molecules trapped in stalled 50S ribosomal subunits, and thus maintains levels of free tRNAs and 50S ribosomes. The chain is Peptidyl-tRNA hydrolase from Nitratidesulfovibrio vulgaris (strain ATCC 29579 / DSM 644 / CCUG 34227 / NCIMB 8303 / VKM B-1760 / Hildenborough) (Desulfovibrio vulgaris).